A 338-amino-acid chain; its full sequence is MKVYYDSDADLGLIQSKKVAIIGYGSQGHAHALNLKDSGVDVVVGLRAGSSSWMKAEGSGLQVAEVADAVGGADLVMMLVPDEHQAKIYREQIAPNLKDDAALVFAHGFNIHYGQIEAPAGVDVFLVAPKGPGHLVRAEYLRGGGVPSLVAIHQNATGKALDLALSYASANGGGRAGIIETSFKEETETDLFGEQAVLCGGITALIQAGFETLVEAGYAPEMAYFECLHETKLIVDLIYEGGIANMRYSISNTAEYGDLTRGPRVITEETKKEMKKILDEIQTGEFPREWISENISGRPKFLGLRRRGEAHQIEQVGAKLRAMMPWIQASKLVDKAKN.

The region spanning Met-1–Thr-181 is the KARI N-terminal Rossmann domain. Residues Tyr-24–Gln-27, Arg-47, Ser-50, Ser-52, and Asp-82–Gln-85 contribute to the NADP(+) site. The active site involves His-107. Gly-133 serves as a coordination point for NADP(+). The 146-residue stretch at Ser-182–Ile-327 folds into the KARI C-terminal knotted domain. Asp-190, Glu-194, Glu-226, and Glu-230 together coordinate Mg(2+). Ser-251 lines the substrate pocket.

The protein belongs to the ketol-acid reductoisomerase family. Mg(2+) serves as cofactor.

The catalysed reaction is (2R)-2,3-dihydroxy-3-methylbutanoate + NADP(+) = (2S)-2-acetolactate + NADPH + H(+). It catalyses the reaction (2R,3R)-2,3-dihydroxy-3-methylpentanoate + NADP(+) = (S)-2-ethyl-2-hydroxy-3-oxobutanoate + NADPH + H(+). It functions in the pathway amino-acid biosynthesis; L-isoleucine biosynthesis; L-isoleucine from 2-oxobutanoate: step 2/4. It participates in amino-acid biosynthesis; L-valine biosynthesis; L-valine from pyruvate: step 2/4. Its function is as follows. Involved in the biosynthesis of branched-chain amino acids (BCAA). Catalyzes an alkyl-migration followed by a ketol-acid reduction of (S)-2-acetolactate (S2AL) to yield (R)-2,3-dihydroxy-isovalerate. In the isomerase reaction, S2AL is rearranged via a Mg-dependent methyl migration to produce 3-hydroxy-3-methyl-2-ketobutyrate (HMKB). In the reductase reaction, this 2-ketoacid undergoes a metal-dependent reduction by NADPH to yield (R)-2,3-dihydroxy-isovalerate. The protein is Ketol-acid reductoisomerase (NADP(+)) of Magnetococcus marinus (strain ATCC BAA-1437 / JCM 17883 / MC-1).